Consider the following 458-residue polypeptide: Probable alpha-L-glutamate ligase (458 aa).

The segment at 1 to 162 (MSDNKFIIGS…YGVKSAKKSG (162 aa)) is unknown. Residues 163-458 (LKIGLLASNP…IEKKLGWKAE (296 aa)) form an alpha-L-glutamate ligase region. One can recognise an ATP-grasp domain in the interval 267-450 (LQLLQKNNLD…IAGAMIDSIE (184 aa)). ATP-binding positions include Lys304, 341 to 342 (EF), Asp350, and 374 to 376 (RAN). The Mg(2+) site is built by Asp411, Glu423, and Asn425. Positions 411, 423, and 425 each coordinate Mn(2+).

It in the C-terminal section; belongs to the RimK family. Mg(2+) serves as cofactor. The cofactor is Mn(2+).

The protein is Probable alpha-L-glutamate ligase of Shewanella halifaxensis (strain HAW-EB4).